A 700-amino-acid chain; its full sequence is MAPQKHGGSSAPSGKPSAAASLLPVRKPKMEQIQADHELFLQAFEKPTQIYRFLRTRNLIAPIFLHRTLTYMSHRNSRSNAKRKTFKVNDLLLKVEKMKGDQESHSVSAHLQLTFTGFFHKIDKPSQNSENEQSSVTLEVLLVKVCHKKRKDVSCPIRQVPTGKKQVPLNPELNPAKPSTFPSLAVSSNEFEPSNSHMVKSYSLLFRVTRQGRRDFNGLTNGETNENIDVSEEPPARRKRNSSNRDEGDKTFVAQMTVFDKNRRLQLLDGEYEVAMQEMEDCPVNKKRATWETILDGKRLPPFETFSQGPTLQFTLRWTNDTPDKSTAPIAKPLATRNSESLPQEHKPSSVKPAQTVAVKESLSSDLQARKERDVSSEPRQKLRIFYQFLYNNNTRQQTEARDDLHCPWCTLNCRKLYSLLKHLKLCHSRFIFNYVYHPKGARIDVSINECYDGSYAGNPQDIHRQPGFAFSRNGPVKRTPITHILVCRPKRTKASMSEFLESEDGEVEQQRTYSSGHNRLYFHSDTCLPLRPQEMDVDSEDEKDPEWLREKTITQIEEFSDVNEGEKEVMKMWNLHVMKHGFIADNQMNHGCMLFVDNYGPQIIQKNLCRNFMLHLVSMHDFNLISITTIDKAVSRLREIQQKVERDECLAPPSDEAFEEPNRTTSSSSSFMETNGKDRVVENDCVSGQPPKHSKKQKP.

2 disordered regions span residues 215–250 and 319–376; these read DFNG…EGDK and TNDT…RDVS. A compositionally biased stretch (polar residues) spans 218-228; it reads GLTNGETNENI. The C2H2-type zinc finger occupies 405-428; that stretch reads LHCPWCTLNCRKLYSLLKHLKLCH. The VEFS-box stretch occupies residues 520–596; the sequence is RLYFHSDTCL…NQMNHGCMLF (77 aa). Residues 651-700 are disordered; the sequence is LAPPSDEAFEEPNRTTSSSSSFMETNGKDRVVENDCVSGQPPKHSKKQKP. The segment covering 664-674 has biased composition (polar residues); sequence RTTSSSSSFME.

It belongs to the VEFS (VRN2-EMF2-FIS2-SU(Z)12) family. In terms of assembly, component of the prc2/eed-ezh2 complex.

The protein localises to the nucleus. In terms of biological role, polycomb group (PcG) protein. Component of the prc2/eed-ezh2 complex, which methylates 'Lys-9' (H3K9me) and 'Lys-27' (H3K27me) of histone H3, leading to transcriptional repression of the affected target gene. The polypeptide is Polycomb protein suz12 (suz12) (Xenopus tropicalis (Western clawed frog)).